The following is a 473-amino-acid chain: Photosystem II CP43 reaction center protein (473 aa).

The propeptide occupies 1 to 14 (MKTLYSLRRFYHVE). Position 15 is an N-acetylthreonine (T15). Position 15 is a phosphothreonine (T15). The next 5 membrane-spanning stretches (helical) occupy residues 69–93 (LFEV…PHLA), 134–155 (LLGP…KDRN), 178–200 (KALY…RKIT), 255–275 (KPFA…LSYS), and 291–312 (WFNN…ASQA). E367 lines the [CaMn4O5] cluster pocket. A helical transmembrane segment spans residues 447-471 (RARAAAAGFEKGIDRDFEPVLSMTP).

Belongs to the PsbB/PsbC family. PsbC subfamily. In terms of assembly, PSII is composed of 1 copy each of membrane proteins PsbA, PsbB, PsbC, PsbD, PsbE, PsbF, PsbH, PsbI, PsbJ, PsbK, PsbL, PsbM, PsbT, PsbX, PsbY, PsbZ, Psb30/Ycf12, at least 3 peripheral proteins of the oxygen-evolving complex and a large number of cofactors. It forms dimeric complexes. Binds multiple chlorophylls and provides some of the ligands for the Ca-4Mn-5O cluster of the oxygen-evolving complex. It may also provide a ligand for a Cl- that is required for oxygen evolution. PSII binds additional chlorophylls, carotenoids and specific lipids. is required as a cofactor.

It localises to the plastid. Its subcellular location is the chloroplast thylakoid membrane. One of the components of the core complex of photosystem II (PSII). It binds chlorophyll and helps catalyze the primary light-induced photochemical processes of PSII. PSII is a light-driven water:plastoquinone oxidoreductase, using light energy to abstract electrons from H(2)O, generating O(2) and a proton gradient subsequently used for ATP formation. This chain is Photosystem II CP43 reaction center protein, found in Coffea arabica (Arabian coffee).